Consider the following 198-residue polypeptide: Peptide methionine sulfoxide reductase MsrA 2 (198 aa).

The active site involves Cys-32.

This sequence belongs to the MsrA Met sulfoxide reductase family.

It carries out the reaction L-methionyl-[protein] + [thioredoxin]-disulfide + H2O = L-methionyl-(S)-S-oxide-[protein] + [thioredoxin]-dithiol. The enzyme catalyses [thioredoxin]-disulfide + L-methionine + H2O = L-methionine (S)-S-oxide + [thioredoxin]-dithiol. In terms of biological role, has an important function as a repair enzyme for proteins that have been inactivated by oxidation. Catalyzes the reversible oxidation-reduction of methionine sulfoxide in proteins to methionine. The polypeptide is Peptide methionine sulfoxide reductase MsrA 2 (msrA2) (Rhizobium meliloti (strain 1021) (Ensifer meliloti)).